Reading from the N-terminus, the 276-residue chain is Glutamate racemase (276 aa).

Substrate-binding positions include 10–11 (DS) and 42–43 (YG). The active-site Proton donor/acceptor is cysteine 73. 74–75 (NS) lines the substrate pocket. The active-site Proton donor/acceptor is the cysteine 183. 184-185 (TH) provides a ligand contact to substrate.

This sequence belongs to the aspartate/glutamate racemases family.

The enzyme catalyses L-glutamate = D-glutamate. It functions in the pathway cell wall biogenesis; peptidoglycan biosynthesis. In terms of biological role, provides the (R)-glutamate required for cell wall biosynthesis. The chain is Glutamate racemase from Parafrankia sp. (strain EAN1pec).